A 236-amino-acid chain; its full sequence is 2,3,4,5-tetrahydropyridine-2,6-dicarboxylate N-acetyltransferase (236 aa).

This sequence belongs to the transferase hexapeptide repeat family. DapH subfamily.

The enzyme catalyses (S)-2,3,4,5-tetrahydrodipicolinate + acetyl-CoA + H2O = L-2-acetamido-6-oxoheptanedioate + CoA. It participates in amino-acid biosynthesis; L-lysine biosynthesis via DAP pathway; LL-2,6-diaminopimelate from (S)-tetrahydrodipicolinate (acetylase route): step 1/3. In terms of biological role, catalyzes the transfer of an acetyl group from acetyl-CoA to tetrahydrodipicolinate. This chain is 2,3,4,5-tetrahydropyridine-2,6-dicarboxylate N-acetyltransferase, found in Bacillus pumilus (strain SAFR-032).